The sequence spans 375 residues: Growth/differentiation factor 8 (375 aa).

Positions 1 to 18 are cleaved as a signal peptide; it reads MQKLQIFVYIYLFVLIVA. Residues 19–266 constitute a propeptide that is removed on maturation; it reads GPVDLNENSE…VTDTPKRSRR (248 aa). 2 N-linked (GlcNAc...) asparagine glycosylation sites follow: Asn-48 and Asn-71. 4 cysteine pairs are disulfide-bonded: Cys-272/Cys-282, Cys-281/Cys-340, Cys-309/Cys-372, and Cys-313/Cys-374.

The protein belongs to the TGF-beta family. As to quaternary structure, homodimer; disulfide-linked. Interacts with WFIKKN2, leading to inhibit its activity. Interacts with FSTL3. Synthesized as large precursor molecule that undergoes proteolytic cleavage to generate an N-terminal propeptide and a disulfide linked C-terminal dimer, which is the biologically active molecule. The circulating form consists of a latent complex of the C-terminal dimer and other proteins, including its propeptide, which maintain the C-terminal dimer in a latent, inactive state. Ligand activation requires additional cleavage of the prodomain by a tolloid-like metalloproteinase.

It is found in the secreted. Functionally, acts specifically as a negative regulator of skeletal muscle growth. The sequence is that of Growth/differentiation factor 8 (MSTN) from Aepyceros melampus (Impala).